The chain runs to 381 residues: Cytochrome b (381 aa).

Helical transmembrane passes span 34 to 54 (FGSL…FLAM), 78 to 99 (WLIR…YLHI), 114 to 134 (WNIG…GYVL), and 179 to 199 (FFAF…LHFL). Heme b-binding residues include His84 and His98. 2 residues coordinate heme b: His183 and His197. His202 is a binding site for a ubiquinone. 4 helical membrane-spanning segments follow: residues 227-247 (YKDI…VLFL), 289-309 (LGGV…PFLH), 321-341 (LTQL…WIGG), and 348-368 (FIFI…IITP).

Belongs to the cytochrome b family. As to quaternary structure, the cytochrome bc1 complex contains 3 respiratory subunits (MT-CYB, CYC1 and UQCRFS1), 2 core proteins (UQCRC1 and UQCRC2) and probably 6 low-molecular weight proteins. Heme b serves as cofactor.

The protein resides in the mitochondrion inner membrane. Component of the ubiquinol-cytochrome c reductase complex (complex III or cytochrome b-c1 complex) that is part of the mitochondrial respiratory chain. The b-c1 complex mediates electron transfer from ubiquinol to cytochrome c. Contributes to the generation of a proton gradient across the mitochondrial membrane that is then used for ATP synthesis. This is Cytochrome b (mt-cyb) from Heterodontus francisci (Horn shark).